Reading from the N-terminus, the 331-residue chain is Tetraacyldisaccharide 4'-kinase (331 aa).

Residue 51–58 (TAGGAGKT) coordinates ATP.

Belongs to the LpxK family.

It catalyses the reaction a lipid A disaccharide + ATP = a lipid IVA + ADP + H(+). It functions in the pathway glycolipid biosynthesis; lipid IV(A) biosynthesis; lipid IV(A) from (3R)-3-hydroxytetradecanoyl-[acyl-carrier-protein] and UDP-N-acetyl-alpha-D-glucosamine: step 6/6. In terms of biological role, transfers the gamma-phosphate of ATP to the 4'-position of a tetraacyldisaccharide 1-phosphate intermediate (termed DS-1-P) to form tetraacyldisaccharide 1,4'-bis-phosphate (lipid IVA). In Rhodospirillum rubrum (strain ATCC 11170 / ATH 1.1.1 / DSM 467 / LMG 4362 / NCIMB 8255 / S1), this protein is Tetraacyldisaccharide 4'-kinase.